Consider the following 147-residue polypeptide: Large ribosomal subunit protein bL9 (147 aa).

This sequence belongs to the bacterial ribosomal protein bL9 family.

Functionally, binds to the 23S rRNA. This is Large ribosomal subunit protein bL9 from Bdellovibrio bacteriovorus (strain ATCC 15356 / DSM 50701 / NCIMB 9529 / HD100).